Reading from the N-terminus, the 734-residue chain is Photosystem I P700 chlorophyll a apoprotein A2 (734 aa).

8 helical membrane passes run 46 to 69 (IFASHFGQLAIIFLWTSGNLFHVA), 135 to 158 (LYTGSLFLLGLAAVALVAGWLHLQ), 175 to 199 (LNHHLSGLFGVSSLAWTGHLIHVAI), 273 to 291 (IAHHHLAIAVLFIVAGHMY), 330 to 353 (LHFQLGLALACLGVITSLVAQHIY), 369 to 395 (AALYTHHQYIAGFIMTGAFAHGAIFFI), 417 to 439 (AIISHLSWASLFLGFHTLGLYVH), and 517 to 535 (FLVHHAIALGLHTTTLILV). [4Fe-4S] cluster is bound by residues C559 and C568. 2 helical membrane-spanning segments follow: residues 575 to 596 (AFYLAVFWMLNTIGWVTFYWHW) and 643 to 665 (LSVWAWMFLFGHLVWATGFMFLI). Chlorophyll a contacts are provided by H654, M662, and Y670. W671 lines the phylloquinone pocket. Residues 707 to 727 (LVGLAHFSVGYIFTYAAFLIA) form a helical membrane-spanning segment.

This sequence belongs to the PsaA/PsaB family. The PsaA/B heterodimer binds the P700 chlorophyll special pair and subsequent electron acceptors. PSI consists of a core antenna complex that captures photons, and an electron transfer chain that converts photonic excitation into a charge separation. The eukaryotic PSI reaction center is composed of at least 11 subunits. It depends on P700 is a chlorophyll a/chlorophyll a' dimer, A0 is one or more chlorophyll a, A1 is one or both phylloquinones and FX is a shared 4Fe-4S iron-sulfur center. as a cofactor.

Its subcellular location is the plastid. It is found in the chloroplast thylakoid membrane. The catalysed reaction is reduced [plastocyanin] + hnu + oxidized [2Fe-2S]-[ferredoxin] = oxidized [plastocyanin] + reduced [2Fe-2S]-[ferredoxin]. In terms of biological role, psaA and PsaB bind P700, the primary electron donor of photosystem I (PSI), as well as the electron acceptors A0, A1 and FX. PSI is a plastocyanin-ferredoxin oxidoreductase, converting photonic excitation into a charge separation, which transfers an electron from the donor P700 chlorophyll pair to the spectroscopically characterized acceptors A0, A1, FX, FA and FB in turn. Oxidized P700 is reduced on the lumenal side of the thylakoid membrane by plastocyanin. In Staurastrum punctulatum (Green alga), this protein is Photosystem I P700 chlorophyll a apoprotein A2.